Consider the following 361-residue polypeptide: MISANSLLISTLCAFAIATPLSKRDSCTLTGSSLSSLSTVKKCSSIVIKDLTVPAGQTLDLTGLSSGTTVTFEGTTTFQYKEWSGPLISISGSKISVVGASGHTIDGQGAKWWDGLGDSGKVKPKFVKLALTGTSKVTGLNIKNAPHQVFSINKCSDLTISDITIDIRDGDSAGGHNTDGFDVGSSSNVLIQGCTVYNQDDCIAVNSGSTIKFMNNYCYNGHGISVGSVGGRSDNTVNGFWAENNHVINSDNGLRIKTVEGATGTVTNVNFISNKISGIKSYGIVIEGDYLNSKTTGTATGGVPISNLVMKDITGSVNSTAKRVKILVKNATNWQWSGVSITGGSSYSGCSGIPSGSGASC.

Residues 1–18 form the signal peptide; that stretch reads MISANSLLISTLCAFAIA. A disulfide bridge connects residues Cys27 and Cys43. PbH1 repeat units lie at residues 155–185, 186–207, 208–228, 237–258, and 266–288; these read CSDL…DVGS, SSNV…AVNS, GSTI…SVGS, VNGF…RIKT, and VTNV…VIEG. The active-site Proton donor is Asp200. Cys202 and Cys218 are joined by a disulfide. Residue His222 is part of the active site. Residues Asn318 and Asn330 are each glycosylated (N-linked (GlcNAc...) asparagine). An intrachain disulfide couples Cys350 to Cys361.

It belongs to the glycosyl hydrolase 28 family.

It catalyses the reaction (1,4-alpha-D-galacturonosyl)n+m + H2O = (1,4-alpha-D-galacturonosyl)n + (1,4-alpha-D-galacturonosyl)m.. In Saccharomyces cerevisiae (strain ATCC 204508 / S288c) (Baker's yeast), this protein is Polygalacturonase (PGU1).